Consider the following 453-residue polypeptide: tRNA modification GTPase MnmE (453 aa).

(6S)-5-formyl-5,6,7,8-tetrahydrofolate contacts are provided by Arg22, Glu79, and Lys119. Residues 215 to 376 enclose the TrmE-type G domain; it reads GMKVVIAGRP…LKQHLKSLMG (162 aa). A K(+)-binding site is contributed by Asn225. GTP-binding positions include 225–230, 244–250, 269–272, and 334–337; these read NAGKSS, TEIAGTT, DTAG, and NKAD. Ser229 lines the Mg(2+) pocket. Residues Thr244, Ile246, and Thr249 each coordinate K(+). Thr250 serves as a coordination point for Mg(2+). Lys453 provides a ligand contact to (6S)-5-formyl-5,6,7,8-tetrahydrofolate.

The protein belongs to the TRAFAC class TrmE-Era-EngA-EngB-Septin-like GTPase superfamily. TrmE GTPase family. In terms of assembly, homodimer. Heterotetramer of two MnmE and two MnmG subunits. The cofactor is K(+).

It localises to the cytoplasm. Exhibits a very high intrinsic GTPase hydrolysis rate. Involved in the addition of a carboxymethylaminomethyl (cmnm) group at the wobble position (U34) of certain tRNAs, forming tRNA-cmnm(5)s(2)U34. The protein is tRNA modification GTPase MnmE of Shewanella baltica (strain OS195).